The sequence spans 347 residues: Protein-glutamate methylesterase/protein-glutamine glutaminase (347 aa).

The Response regulatory domain occupies 6–123 (RVLVVDDSPT…HRPFGDLAEK (118 aa)). The residue at position 57 (Asp-57) is a 4-aspartylphosphate. A CheB-type methylesterase domain is found at 150–342 (FRVGRKIVAI…EEILKLTAAR (193 aa)). Catalysis depends on residues Ser-162, His-188, and Asp-284.

Belongs to the CheB family. In terms of processing, phosphorylated by CheA. Phosphorylation of the N-terminal regulatory domain activates the methylesterase activity.

Its subcellular location is the cytoplasm. The enzyme catalyses [protein]-L-glutamate 5-O-methyl ester + H2O = L-glutamyl-[protein] + methanol + H(+). The catalysed reaction is L-glutaminyl-[protein] + H2O = L-glutamyl-[protein] + NH4(+). Functionally, involved in chemotaxis. Part of a chemotaxis signal transduction system that modulates chemotaxis in response to various stimuli. Catalyzes the demethylation of specific methylglutamate residues introduced into the chemoreceptors (methyl-accepting chemotaxis proteins or MCP) by CheR. Also mediates the irreversible deamidation of specific glutamine residues to glutamic acid. The chain is Protein-glutamate methylesterase/protein-glutamine glutaminase from Rhizobium etli (strain ATCC 51251 / DSM 11541 / JCM 21823 / NBRC 15573 / CFN 42).